The chain runs to 59 residues: UPF0337 protein PP_4561 (59 aa).

The segment covering 27–43 has biased composition (basic and acidic residues); the sequence is TDNEKLRAEGKAQELKG. Positions 27–59 are disordered; the sequence is TDNEKLRAEGKAQELKGEAQQVKGNVKDAVKKP.

This sequence belongs to the UPF0337 (CsbD) family.

The sequence is that of UPF0337 protein PP_4561 from Pseudomonas putida (strain ATCC 47054 / DSM 6125 / CFBP 8728 / NCIMB 11950 / KT2440).